Reading from the N-terminus, the 617-residue chain is Chaperone protein DnaK (617 aa).

The tract at residues 579–617 (KAQQEAQQASGEAGSADARGPDETVVDADYEVVDDEKRK) is disordered. Low complexity predominate over residues 580–594 (AQQEAQQASGEAGSA). The span at 602–617 (TVVDADYEVVDDEKRK) shows a compositional bias: acidic residues.

This sequence belongs to the heat shock protein 70 family.

Acts as a chaperone. The chain is Chaperone protein DnaK from Methanosarcina acetivorans (strain ATCC 35395 / DSM 2834 / JCM 12185 / C2A).